We begin with the raw amino-acid sequence, 593 residues long: Tyrosine-protein phosphatase non-receptor type 11 (593 aa).

N-acetylthreonine is present on threonine 2. 2 consecutive SH2 domains span residues 6 to 102 and 112 to 216; these read WFHP…KYPL and WFHG…KQPL. Residues tyrosine 62 and tyrosine 66 each carry the phosphotyrosine modification. In terms of domain architecture, Tyrosine-protein phosphatase spans 247 to 517; sequence FWEEFETLQQ…EAQYRFIYMA (271 aa). Residues aspartate 425, 459–465, and glutamine 506 contribute to the substrate site; that span reads CSAGIGR. Catalysis depends on cysteine 459, which acts as the Phosphocysteine intermediate. Residues tyrosine 542 and tyrosine 580 each carry the phosphotyrosine; by PDGFR modification.

The protein belongs to the protein-tyrosine phosphatase family. Non-receptor class 2 subfamily. Interacts with phosphorylated SIT1, LIME1, BCAR3 and MZPL1. Interacts with FCRL4, FCRL6, ANKHD1, SHB, INPP5D/SHIP1 and CD84. Interacts with MILR1 (tyrosine-phosphorylated). Interacts with FLT1 (tyrosine-phosphorylated), FLT3 (tyrosine-phosphorylated), FLT4 (tyrosine-phosphorylated), KIT and GRB2. Interacts with PTPNS1. Interacts with KIR2DL1; the interaction is enhanced by ARRB2. Interacts (via SH2 domain) with TEK/TIE2 (tyrosine phosphorylated). Interacts with GAB2. Interacts with TERT; the interaction retains TERT in the nucleus. Interacts with PECAM1 and FER. Interacts with EPHA2 (activated); participates in PTK2/FAK1 dephosphorylation in EPHA2 downstream signaling. Interacts with PDGFRA (tyrosine phosphorylated). Interacts with PDGFRB (tyrosine phosphorylated); this interaction increases the PTPN11 phosphatase activity. Interacts with ROS1; this mediates PTPN11 phosphorylation. Interacts with CEACAM1 (via cytoplasmic domain); this interaction depends on the monomer/dimer equilibrium and is phosphorylation-dependent. Interacts with MPIG6B (via ITIM motif). Interacts with SIGLEC10. Interacts with CLEC12B (via ITIM motif); this interaction triggers dephosphorylation and activation of PTPN11. Interacts (via SH2 domains) with NEDD9/CAS-L; the interaction is enhanced when NEDD9/CAS-L is tyrosine phosphorylated. Phosphorylated on Tyr-542 and Tyr-580 upon receptor protein tyrosine kinase activation; which creates a binding site for GRB2 and other SH2-containing proteins. Phosphorylated upon activation of the receptor-type kinase FLT3. Phosphorylated upon activation of the receptor-type kinase PDGFRA. Phosphorylated by activated PDGFRB. Expressed in brain, muscle and lung.

The protein resides in the cytoplasm. The catalysed reaction is O-phospho-L-tyrosyl-[protein] + H2O = L-tyrosyl-[protein] + phosphate. Its activity is regulated as follows. Inhibited by orthovanadate, molybdate and spermidine. Functionally, acts downstream of various receptor and cytoplasmic protein tyrosine kinases to participate in the signal transduction from the cell surface to the nucleus. Positively regulates MAPK signal transduction pathway. Dephosphorylates GAB1, ARHGAP35 and EGFR. Dephosphorylates ROCK2 at 'Tyr-722' resulting in stimulation of its RhoA binding activity. Dephosphorylates CDC73. Dephosphorylates SOX9 on tyrosine residues, leading to inactivate SOX9 and promote ossification. Dephosphorylates tyrosine-phosphorylated NEDD9/CAS-L. The chain is Tyrosine-protein phosphatase non-receptor type 11 (Ptpn11) from Rattus norvegicus (Rat).